Here is a 1190-residue protein sequence, read N- to C-terminus: PAN2-PAN3 deadenylation complex catalytic subunit PAN2 (1190 aa).

WD repeat units lie at residues 24 to 63 (TTIV…NSLY), 129 to 166 (NKFN…PNVL), 167 to 207 (SSFD…TMKT), 222 to 264 (GNYI…AIAP), 266 to 306 (PFPA…NVYL), and 322 to 361 (NNKP…KDFV). The linker stretch occupies residues 364–511 (PQPVEQPDII…FQYKFQGKLN (148 aa)). The USP domain occupies 512 to 924 (KVPNCYSRLQ…KPIVIMYQQT (413 aa)). An Exonuclease domain is found at 988 to 1158 (VAIDAEFVML…EDANTALLLY (171 aa)). Residues aspartate 991, glutamate 993, aspartate 1097, and aspartate 1150 each coordinate a divalent metal cation.

This sequence belongs to the peptidase C19 family. PAN2 subfamily. Forms a heterotrimer with an asymmetric homodimer of the regulatory subunit PAN3 to form the poly(A)-nuclease (PAN) deadenylation complex. A divalent metal cation serves as cofactor.

The protein localises to the cytoplasm. It carries out the reaction Exonucleolytic cleavage of poly(A) to 5'-AMP.. With respect to regulation, positively regulated by the regulatory subunit PAN3. Its function is as follows. Catalytic subunit of the poly(A)-nuclease (PAN) deadenylation complex, one of two cytoplasmic mRNA deadenylases involved in mRNA turnover. PAN specifically shortens poly(A) tails of RNA and the activity is stimulated by poly(A)-binding protein PAB1. PAN deadenylation is followed by rapid degradation of the shortened mRNA tails by the CCR4-NOT complex. Deadenylated mRNAs are then degraded by two alternative mechanisms, namely exosome-mediated 3'-5' exonucleolytic degradation, or deadenylation-dependent mRNA decaping and subsequent 5'-3' exonucleolytic degradation by XRN1. May also be involved in post-transcriptional maturation of mRNA poly(A) tails. The sequence is that of PAN2-PAN3 deadenylation complex catalytic subunit PAN2 from Candida albicans (strain SC5314 / ATCC MYA-2876) (Yeast).